Consider the following 318-residue polypeptide: NADH-ubiquinone oxidoreductase chain 1 (318 aa).

Helical transmembrane passes span phenylalanine 2–leucine 22, methionine 70–proline 90, leucine 100–glycine 120, valine 136–methionine 156, leucine 172–glutamate 192, leucine 222–phenylalanine 242, glutamate 253–isoleucine 273, and leucine 294–isoleucine 314.

This sequence belongs to the complex I subunit 1 family. Core subunit of respiratory chain NADH dehydrogenase (Complex I) which is composed of 45 different subunits.

Its subcellular location is the mitochondrion inner membrane. The enzyme catalyses a ubiquinone + NADH + 5 H(+)(in) = a ubiquinol + NAD(+) + 4 H(+)(out). Its function is as follows. Core subunit of the mitochondrial membrane respiratory chain NADH dehydrogenase (Complex I) which catalyzes electron transfer from NADH through the respiratory chain, using ubiquinone as an electron acceptor. Essential for the catalytic activity and assembly of complex I. In Balaenoptera musculus (Blue whale), this protein is NADH-ubiquinone oxidoreductase chain 1 (MT-ND1).